Consider the following 297-residue polypeptide: AKT-interacting protein (297 aa).

The span at 1 to 13 (MNLNPFWSMSTNT) shows a compositional bias: polar residues. Residues 1-45 (MNLNPFWSMSTNTGRKRSDGEEQSGEQQQQQRASPARPSFGKKQL) form a disordered region. Low complexity predominate over residues 25 to 39 (GEQQQQQRASPARPS). Positions 79 to 227 (YLEYSLLAEF…VVDSVKLCNS (149 aa)) constitute a UBC core domain. Residues 262 to 297 (KRRPEDHHKGLQVSGLSWVKPGSTQPFSKDDNPPQN) are disordered.

The protein belongs to the ubiquitin-conjugating enzyme family. FTS subfamily.

It is found in the cytoplasm. Its subcellular location is the cell membrane. May function to promote vesicle trafficking and/or fusion. May also regulate apoptosis. The protein is AKT-interacting protein (aktip) of Salmo salar (Atlantic salmon).